The sequence spans 404 residues: Probable tRNA sulfurtransferase (404 aa).

Residues glutamine 60 to threonine 165 enclose the THUMP domain. ATP is bound by residues methionine 183 to leucine 184, histidine 208 to phenylalanine 209, arginine 265, glycine 287, and glutamine 296.

The protein belongs to the ThiI family.

Its subcellular location is the cytoplasm. The catalysed reaction is [ThiI sulfur-carrier protein]-S-sulfanyl-L-cysteine + a uridine in tRNA + 2 reduced [2Fe-2S]-[ferredoxin] + ATP + H(+) = [ThiI sulfur-carrier protein]-L-cysteine + a 4-thiouridine in tRNA + 2 oxidized [2Fe-2S]-[ferredoxin] + AMP + diphosphate. It carries out the reaction [ThiS sulfur-carrier protein]-C-terminal Gly-Gly-AMP + S-sulfanyl-L-cysteinyl-[cysteine desulfurase] + AH2 = [ThiS sulfur-carrier protein]-C-terminal-Gly-aminoethanethioate + L-cysteinyl-[cysteine desulfurase] + A + AMP + 2 H(+). It participates in cofactor biosynthesis; thiamine diphosphate biosynthesis. Catalyzes the ATP-dependent transfer of a sulfur to tRNA to produce 4-thiouridine in position 8 of tRNAs, which functions as a near-UV photosensor. Also catalyzes the transfer of sulfur to the sulfur carrier protein ThiS, forming ThiS-thiocarboxylate. This is a step in the synthesis of thiazole, in the thiamine biosynthesis pathway. The sulfur is donated as persulfide by IscS. The protein is Probable tRNA sulfurtransferase of Streptococcus sanguinis (strain SK36).